The chain runs to 399 residues: Formate-dependent phosphoribosylglycinamide formyltransferase (399 aa).

N(1)-(5-phospho-beta-D-ribosyl)glycinamide contacts are provided by residues 8–9 and E68; that span reads EL. Residues R100, K141, 146–151, 185–188, and E193 each bind ATP; these read SSGHGQ and EALA. One can recognise an ATP-grasp domain in the interval 105–308; it reads VLAHEELGLP…EFALHARAIL (204 aa). Mg(2+)-binding residues include E266 and E279. N(1)-(5-phospho-beta-D-ribosyl)glycinamide-binding positions include D286, K361, and 368–369; that span reads RR.

This sequence belongs to the PurK/PurT family. Homodimer.

The catalysed reaction is N(1)-(5-phospho-beta-D-ribosyl)glycinamide + formate + ATP = N(2)-formyl-N(1)-(5-phospho-beta-D-ribosyl)glycinamide + ADP + phosphate + H(+). Its pathway is purine metabolism; IMP biosynthesis via de novo pathway; N(2)-formyl-N(1)-(5-phospho-D-ribosyl)glycinamide from N(1)-(5-phospho-D-ribosyl)glycinamide (formate route): step 1/1. Its function is as follows. Involved in the de novo purine biosynthesis. Catalyzes the transfer of formate to 5-phospho-ribosyl-glycinamide (GAR), producing 5-phospho-ribosyl-N-formylglycinamide (FGAR). Formate is provided by PurU via hydrolysis of 10-formyl-tetrahydrofolate. In Bifidobacterium longum (strain NCC 2705), this protein is Formate-dependent phosphoribosylglycinamide formyltransferase.